Consider the following 268-residue polypeptide: Interleukin-1 beta (268 aa).

Residues 1-115 (MAAVPDTSDM…DNWDEGYVCD (115 aa)) constitute a propeptide that is removed on maturation.

It belongs to the IL-1 family. Monomer. In its precursor form, weakly interacts with full-length MEFV; the mature cytokine does not interact at all. Interacts with integrins ITGAV:ITGBV and ITGA5:ITGB1; integrin-binding is required for IL1B signaling. Interacts with cargo receptor TMED10; the interaction is direct and is required for the secretion of IL1B mature form. Interacts with HSP90AB1; the interaction facilitates cargo translocation into the ERGIC. Interacts with HSP90B1; the interaction facilitates cargo translocation into the ERGIC.

It localises to the cytoplasm. The protein localises to the cytosol. The protein resides in the secreted. It is found in the lysosome. Its subcellular location is the extracellular exosome. Potent pro-inflammatory cytokine. Initially discovered as the major endogenous pyrogen, induces prostaglandin synthesis, neutrophil influx and activation, T-cell activation and cytokine production, B-cell activation and antibody production, and fibroblast proliferation and collagen production. Promotes Th17 differentiation of T-cells. Synergizes with IL12/interleukin-12 to induce IFNG synthesis from T-helper 1 (Th1) cells. Plays a role in angiogenesis by inducing VEGF production synergistically with TNF and IL6. Involved in transduction of inflammation downstream of pyroptosis: its mature form is specifically released in the extracellular milieu by passing through the gasdermin-D (GSDMD) pore. The polypeptide is Interleukin-1 beta (IL1B) (Equus caballus (Horse)).